The chain runs to 716 residues: FLYWCH-type zinc finger-containing protein 1 (716 aa).

The segment at 1-35 (MPLPEPSEQEGESVKAGQEPSPKPGTDVIPAAPRK) is disordered. The residue at position 21 (serine 21) is a Phosphoserine. An FLYWCH-type 1 zinc finger spans residues 116–174 (FLRTPFGGRLLVLESFLYKQEKAVGDKVYWKCRQHAELGCRGRAITRGLRATVMRGHCH). Lysine 134 participates in a covalent cross-link: Glycyl lysine isopeptide (Lys-Gly) (interchain with G-Cter in SUMO2). The segment at 191 to 231 (PSLALPEGLGEPQGPEGPGGRVEEPLEGVGPWQCPEEPEPT) is disordered. A compositionally biased stretch (low complexity) spans 195-204 (LPEGLGEPQG). A Phosphoserine modification is found at serine 261. The FLYWCH-type 2 zinc-finger motif lies at 273-331 (FLRTCYGGSFLVHESFLYKREKAVGDKVYWTCRDHALHGCRSRAITQGQRVTVMRGHCH). Serine 371 carries the post-translational modification Phosphoserine. The tract at residues 377–421 (GPGPLTLTRPRPRKRAKVEDQELPTQPEAPDEHQDMDADPGGPEF) is disordered. Residue lysine 393 forms a Glycyl lysine isopeptide (Lys-Gly) (interchain with G-Cter in SUMO2) linkage. The FLYWCH-type 3 zinc finger occupies 421–479 (FLKTPLGGSFLVYESFLYRREKAAGEKVYWTCRDQARMGCRSRAITQGRRVTVMRGHCH). Serine 503 carries the phosphoserine modification. Residues 509-567 (FLKTPLGGSFLVYESFLYRREKAAGEKVYWTCRDQARMGCRSRAITQGRRVMVMRRHCH) form an FLYWCH-type 4 zinc finger. Residue serine 591 is modified to Phosphoserine. The FLYWCH-type 5 zinc finger occupies 600–658 (FLRTSLGGRFLVHESFLYRKEKAAGEKVYWMCRDQARLGCRSRAITQGHRIMVMRSHCH). A Glycyl lysine isopeptide (Lys-Gly) (interchain with G-Cter in SUMO2) cross-link involves residue lysine 685. The residue at position 696 (serine 696) is a Phosphoserine.

In terms of assembly, interacts with CTNNB1 (when unphosphorylated), perhaps preventing interaction of CTNNB1 with TCF4, and thereby regulating transcription activation; phosphorylation of CTNNB1 may inhibit the interaction.

The protein resides in the nucleus. The protein localises to the chromosome. It localises to the centromere. Functionally, transcription cofactor. Negatively regulates transcription activation by catenin beta-1 CTNNB1, perhaps acting by competing with TCF4 for CTNNB1 binding. May play a role in DNA-damage response signaling. Binds specifically to DNA sequences at peri-centromeric chromatin loci. This Homo sapiens (Human) protein is FLYWCH-type zinc finger-containing protein 1 (FLYWCH1).